The primary structure comprises 294 residues: 4-diphosphocytidyl-2-C-methyl-D-erythritol kinase (294 aa).

The active site involves lysine 11. 96–106 (PVAAGIGGGSA) lines the ATP pocket. Aspartate 138 is an active-site residue.

Belongs to the GHMP kinase family. IspE subfamily.

The enzyme catalyses 4-CDP-2-C-methyl-D-erythritol + ATP = 4-CDP-2-C-methyl-D-erythritol 2-phosphate + ADP + H(+). Its pathway is isoprenoid biosynthesis; isopentenyl diphosphate biosynthesis via DXP pathway; isopentenyl diphosphate from 1-deoxy-D-xylulose 5-phosphate: step 3/6. Functionally, catalyzes the phosphorylation of the position 2 hydroxy group of 4-diphosphocytidyl-2C-methyl-D-erythritol. This is 4-diphosphocytidyl-2-C-methyl-D-erythritol kinase from Rhodopseudomonas palustris (strain BisB5).